Reading from the N-terminus, the 630-residue chain is MKREYQDAGGSGGDMGSSKDKMMAAAAGAGEQEEEDVDELLAALGYKVRSSDMADVAQKLEQLEMAMGMGGVGGAGATADDGFVSHLATDTVHYNPSDLSSWVESMLSELNAPPAPLPPATPAPRLASTSSTVTSGAAAGAGYFDLPPAVDSSSSTYALKPIPSPVAAPSADPSTDSAREPKRMRTGGGSTSSSSSSSSSMDGGRTRSSVVEAAPPATQASAAANGPAVPVVVVDTQEAGIRLVHALLACAEAVQQENFSAAEALVKQIPMLASSQGGAMRKVAAYFGEALARRVYRFRPPPDSSLLDAAFADLLHAHFYESCPYLKFAHFTANQAILEAFAGCRRVHVVDFGIKQGMQWPALLQALALRPGGPPSFRLTGVGPPQPDETDALQQVGWKLAQFAHTIRVDFQYRGLVAATLADLEPFMLQPEGDDTDDEPEVIAVNSVFELHRLLAQPGALEKVLGTVRAVRPRIVTVVEQEANHNSGTFLDRFTESLHYYSTMFDSLEGAGAGSGQSTDASPAAAGGTDQVMSEVYLGRQICNVVACEGAERTERHETLGQWRSRLGGSGFAPVHLGSNAYKQASTLLALFAGGDGYRVEEKDGCLTLGWHTRPLIATSAWRVAAAAAP.

The interval 1–35 (MKREYQDAGGSGGDMGSSKDKMMAAAAGAGEQEEE) is disordered. Positions 38 to 42 (DELLA) match the DELLA motif motif. A disordered region spans residues 161–222 (PIPSPVAAPS…AAPPATQASA (62 aa)). 2 stretches are compositionally biased toward low complexity: residues 165–176 (PVAAPSADPSTD) and 191–222 (TSSS…QASA). Residues 234-623 (VDTQEAGIRL…RPLIATSAWR (390 aa)) form the GRAS domain. The tract at residues 241–297 (IRLVHALLACAEAVQQENFSAAEALVKQIPMLASSQGGAMRKVAAYFGEALARRVYR) is leucine repeat I (LRI). A LxCxE motif motif is present at residues 248 to 252 (LACAE). The VHIID stretch occupies residues 316 to 381 (HAHFYESCPY…GGPPSFRLTG (66 aa)). A VHIID motif is present at residues 347–351 (VHVVD). The tract at residues 395 to 427 (QVGWKLAQFAHTIRVDFQYRGLVAATLADLEPF) is leucine repeat II (LRII). The PFYRE stretch occupies residues 443–544 (IAVNSVFELH…EVYLGRQICN (102 aa)). Residues 451 to 455 (LHRLL) carry the LXXLL motif motif. Positions 547–623 (ACEGAERTER…RPLIATSAWR (77 aa)) are SAW.

It belongs to the GRAS family. DELLA subfamily. Post-translationally, phosphorylated. In terms of processing, ubiquitinated. Upon GA application it is ubiquitinated, leading to its subsequent degradation.

Its subcellular location is the nucleus. In terms of biological role, probable transcriptional regulator that acts as a repressor of the gibberellin (GA) signaling pathway. Probably acts by participating in large multiprotein complexes that repress transcription of GA-inducible genes. Upon GA application, it is degraded by the proteasome, allowing the GA signaling pathway. The sequence is that of DELLA protein DWARF8 (D8) from Zea mays (Maize).